The sequence spans 483 residues: Alpha-tubulin N-acetyltransferase (483 aa).

In terms of domain architecture, N-acetyltransferase spans 1–186 (MEFRFNMHPL…NNFVVYEGFF (186 aa)). Residues 120 to 133 (FYVH…GLGR) and 156 to 165 (SEKLLGFLQK) contribute to the acetyl-CoA site. Disordered stretches follow at residues 204–231 (TASP…QTRT), 330–395 (ETLP…VLGS), and 437–472 (SVKI…GGGH). The span at 347 to 369 (YDFHPHHLELHDDTEGGGSHRDQ) shows a compositional bias: basic and acidic residues. Residues 370–383 (SLSPQSVSQQASPV) show a composition bias toward low complexity.

The protein belongs to the acetyltransferase ATAT1 family.

It carries out the reaction L-lysyl-[alpha-tubulin] + acetyl-CoA = N(6)-acetyl-L-lysyl-[alpha-tubulin] + CoA + H(+). Its function is as follows. Specifically acetylates 'Lys-40' in alpha-tubulin on the lumenal side of microtubules. Promotes microtubule destabilization and accelerates microtubule dynamics; this activity may be independent of acetylation activity. Acetylates alpha-tubulin with a slow enzymatic rate, due to a catalytic site that is not optimized for acetyl transfer. Enters the microtubule through each end and diffuses quickly throughout the lumen of microtubules. Acetylates only long/old microtubules because of its slow acetylation rate since it does not have time to act on dynamically unstable microtubules before the enzyme is released. The chain is Alpha-tubulin N-acetyltransferase from Anopheles gambiae (African malaria mosquito).